A 509-amino-acid polypeptide reads, in one-letter code: Maturase K (509 aa).

This sequence belongs to the intron maturase 2 family. MatK subfamily.

It is found in the plastid. Its subcellular location is the chloroplast. In terms of biological role, usually encoded in the trnK tRNA gene intron. Probably assists in splicing its own and other chloroplast group II introns. The sequence is that of Maturase K from Austrocylindropuntia vestita (Cactus).